The following is a 598-amino-acid chain: Kinetochore-associated protein KNL-2 homolog (598 aa).

The 93-residue stretch at 19-111 (VVLRDWWLIK…IFGFPPCWER (93 aa)) folds into the SANTA domain. 2 stretches are compositionally biased toward basic and acidic residues: residues 335 to 344 (AKSSKPEKKG) and 371 to 381 (KSAENKRKIDA). Disordered stretches follow at residues 335–403 (AKSS…NNAK), 445–500 (KESL…EEAE), 520–542 (PEKK…QKRS), and 572–598 (KDGS…LKIK). Residues 383-392 (KLQSPTSNVA) are compositionally biased toward polar residues. Residues 527 to 539 (QKTNAASTDSLGQ) show a composition bias toward polar residues. The segment at 538-572 (GQKRSRSGRVLVSSLEFWRNQIPVYDMDRNLIQVK) is required for localization at centromeres.

This sequence belongs to the KNL2 family. In terms of tissue distribution, expressed in shoot apical meristem, leaf primordia, basal parts of emerging leaves, inflorescence meristems, young inflorescences, developing flower buds, developing sepals and pistils, styles and young siliques.

It localises to the nucleus. It is found in the nucleoplasm. Its subcellular location is the nuclear body. The protein resides in the nucleolus. The protein localises to the chromosome. It localises to the centromere. In terms of biological role, involved in recognition of centromeres and centromeric localization of the centromere-specific histone CENH3. Required for normal progression of mitosis and meiosis. May play a role in the determination of the epigenetic status of centromeres. Binds DNA and RNA in vitro. In Arabidopsis thaliana (Mouse-ear cress), this protein is Kinetochore-associated protein KNL-2 homolog.